The chain runs to 339 residues: Uroporphyrinogen decarboxylase (339 aa).

Residues Arg23 to Arg27, Asp72, Tyr147, Thr202, and His315 each bind substrate.

This sequence belongs to the uroporphyrinogen decarboxylase family. Homodimer.

It localises to the cytoplasm. It catalyses the reaction uroporphyrinogen III + 4 H(+) = coproporphyrinogen III + 4 CO2. Its pathway is porphyrin-containing compound metabolism; protoporphyrin-IX biosynthesis; coproporphyrinogen-III from 5-aminolevulinate: step 4/4. Its function is as follows. Catalyzes the decarboxylation of four acetate groups of uroporphyrinogen-III to yield coproporphyrinogen-III. This is Uroporphyrinogen decarboxylase from Geotalea daltonii (strain DSM 22248 / JCM 15807 / FRC-32) (Geobacter daltonii).